We begin with the raw amino-acid sequence, 304 residues long: Ribonuclease HII (304 aa).

A disordered region spans residues Met1–Ala53. The segment covering Lys24–Ala35 has biased composition (basic residues). Residues Val36 to Ala53 are compositionally biased toward low complexity. An RNase H type-2 domain is found at Trp96–Gly284. The a divalent metal cation site is built by Asp102, Glu103, and Asp193.

It belongs to the RNase HII family. Requires Mn(2+) as cofactor. The cofactor is Mg(2+).

It is found in the cytoplasm. It catalyses the reaction Endonucleolytic cleavage to 5'-phosphomonoester.. Its function is as follows. Endonuclease that specifically degrades the RNA of RNA-DNA hybrids. The protein is Ribonuclease HII of Rhodopseudomonas palustris (strain ATCC BAA-98 / CGA009).